The following is a 475-amino-acid chain: Solute carrier family 46 member 2 (475 aa).

Residues 1–23 (MSPEVTCPRRGHLPRFHPRTWVE) lie on the Cytoplasmic side of the membrane. Residues 24–44 (PVVASSQVAASLYDAGLLLVV) traverse the membrane as a helical segment. The Extracellular portion of the chain corresponds to 45-78 (KASYGTGGSSNHSASPSPRGALEDQQQRAISNFY). The N-linked (GlcNAc...) asparagine glycan is linked to Asn55. The chain crosses the membrane as a helical span at residues 79–99 (IIYNLVVGLSPLLSAYGLGWL). At 100-108 (SDRYHRKIS) the chain is on the cytoplasmic side. The helical transmembrane segment at 109-129 (ICMSLLGFLLSRLGLLLKVLL) threads the bilayer. At 130 to 138 (DWPVEVLYG) the chain is on the extracellular side. The helical transmembrane segment at 139–159 (AAALNGLFGGFSAFWSGVMAL) threads the bilayer. At 160–172 (GSLGSSEGRRSVR) the chain is on the cytoplasmic side. Residues 173-193 (LILIDLMLGLAGFCGSMASGH) traverse the membrane as a helical segment. Topologically, residues 194–205 (LFKQMAGHSGQG) are extracellular. The chain crosses the membrane as a helical span at residues 206–226 (LILTACSVSCASFALLYSLLV). Over 227 to 282 (LKVPESVAKPSQELPAVDTVSGTVGTYRTLDPDQLDQQYAVGHPPSPGKAKPHKTT) the chain is Cytoplasmic. A helical transmembrane segment spans residues 283–303 (IALLFVGAIIYDLAVVGTVDV). At 304–320 (IPLFVLREPLGWNQVQV) the chain is on the extracellular side. Residues 321–341 (GYGMAAGYTIFITSFLGVLVF) traverse the membrane as a helical segment. Over 342-347 (SRCFRD) the chain is Cytoplasmic. A helical membrane pass occupies residues 348–368 (TTMIMIGMVSFGSGALLLAFV). At 369–370 (KE) the chain is on the extracellular side. A helical transmembrane segment spans residues 371–391 (TYMFYIARAVMLFALIPVTTI). Residues 392–406 (RSAMSKLIKGSSYGK) are Cytoplasmic-facing. The helical transmembrane segment at 407-427 (VFVILQLSLALTGVVTSTLYN) threads the bilayer. At 428–435 (KIYQLTMD) the chain is on the extracellular side. Residues 436 to 456 (MFVGSCFALSSFLSFLAIIPI) form a helical membrane-spanning segment. The Cytoplasmic segment spans residues 457 to 475 (SIVAYKQVPLSPYGDIIEK).

This sequence belongs to the major facilitator superfamily. SLC46A family. In terms of processing, glycosylated. Strongly expressed in the adult thymus. Expressed in spleen, lymph nodes, thymus, PBL, bone marrow and fetal liver. Expressed in monocytes and pre-dendridic cells.

The protein resides in the endosome membrane. It is found in the cell membrane. It catalyses the reaction N-acetyl-beta-D-glucosaminyl-(1-&gt;4)-1,6-anhydro-N-acetyl-beta-D-muramoyl-L-alanyl-gamma-D-glutamyl-meso-2,6-diaminopimeloyl-D-alanine(out) + n H(+)(out) = N-acetyl-beta-D-glucosaminyl-(1-&gt;4)-1,6-anhydro-N-acetyl-beta-D-muramoyl-L-alanyl-gamma-D-glutamyl-meso-2,6-diaminopimeloyl-D-alanine(in) + n H(+)(in). The catalysed reaction is L-alanyl-gamma-D-glutamyl-meso-2,6-diaminopimelate(out) + n H(+)(out) = L-alanyl-gamma-D-glutamyl-meso-2,6-diaminopimelate(in) + n H(+)(in). The enzyme catalyses N-acetyl-D-muramoyl-L-alanyl-D-isoglutamine(out) + n H(+)(out) = N-acetyl-D-muramoyl-L-alanyl-D-isoglutamine(in) + n H(+)(in). It carries out the reaction 2',3'-cGAMP(out) + n H(+)(out) = 2',3'-cGAMP(in) + n H(+)(in). It catalyses the reaction 3',3'-cGAMP(out) + n H(+)(out) = 3',3'-cGAMP(in) + n H(+)(in). Proton-coupled transporter that delivers pathogen-associated or danger-associated molecular patterns to cytosolic pattern recognition receptors as part of the innate immune response to microbes or tissue injury. Has selectivity toward muropeptides that contain the amino acid diaminopimelic acid (DAP-type peptidoglycan muropeptides) including Tri-DAP and tracheal toxin (TCT), common in Gram-negative bacteria and Gram-positive bacilli. In the context of immune recognition of skin microbiota, shuttles bacterial muropeptides across the endolysosomal membranes into the cytosol for recognition by NOD1, triggering MYD88-dependent secretion of IL1A and neutrophil recruitment in a pyroptosis-type inflammatory process. To a lesser extent and redundantly, transports muramyl dipeptides derived from most bacterial proteoglycans, eliciting NOD2 receptor activation and downstream inflammatory responses. Postulated to function as a dominant importer of cyclic GMP-AMP dinucleotides (cGAMPs) in monocyte and macrophage cell lineages. Selectively imports cGAMPs derived from pathogenic bacteria such as 3'3'-cGAMP thus providing for differential immune recognition of pathogenic versus commensal bacteria. During tumorigenesis may transport extracellular tumor-derived 2'3'-cGAMP across the plasma membrane of M1-polarized macrophages to activate the anti-tumoral stimulator of interferon genes (STING) pathway. The transport mechanism, its electrogenicity and stoichiometry remain to be elucidated. The polypeptide is Solute carrier family 46 member 2 (Homo sapiens (Human)).